We begin with the raw amino-acid sequence, 431 residues long: Enolase (431 aa).

Glutamine 167 is a binding site for (2R)-2-phosphoglycerate. Glutamate 209 acts as the Proton donor in catalysis. Residues aspartate 246, glutamate 290, and aspartate 317 each contribute to the Mg(2+) site. 4 residues coordinate (2R)-2-phosphoglycerate: lysine 342, arginine 371, serine 372, and lysine 393. Residue lysine 342 is the Proton acceptor of the active site.

This sequence belongs to the enolase family. In terms of assembly, component of the RNA degradosome, a multiprotein complex involved in RNA processing and mRNA degradation. Mg(2+) serves as cofactor.

It is found in the cytoplasm. Its subcellular location is the secreted. It localises to the cell surface. It carries out the reaction (2R)-2-phosphoglycerate = phosphoenolpyruvate + H2O. It participates in carbohydrate degradation; glycolysis; pyruvate from D-glyceraldehyde 3-phosphate: step 4/5. In terms of biological role, catalyzes the reversible conversion of 2-phosphoglycerate (2-PG) into phosphoenolpyruvate (PEP). It is essential for the degradation of carbohydrates via glycolysis. This chain is Enolase, found in Enterobacter sp. (strain 638).